The chain runs to 516 residues: Radial spoke head protein 3 homolog A (516 aa).

Disordered regions lie at residues 1–45 (MAAT…GNPA), 120–139 (STLNQASAMTDPNPRTAEAS), and 190–233 (PTGQ…PVEG). The segment covering 12–25 (AKKRPLHQRARRPA) has biased composition (basic residues). The segment covering 120-129 (STLNQASAMT) has biased composition (polar residues). Residues 208 to 217 (QARRRALARK) are compositionally biased toward basic residues. Basic and acidic residues predominate over residues 218–233 (RAQEQLKPRTPEPVEG). Thr-270 carries the phosphothreonine; by MAPK1 modification. Residues 333-369 (YEEIRNVELAEVQRLEEQERRHREEKERRKKQQWEIV) adopt a coiled-coil conformation. The disordered stretch occupies residues 459–516 (EAMPPGQKTNVINGPNTVTDPSVTTLHTQKPVLDRVSSQPAPSQERKPVEEGGHLMAE). Residues 465-486 (QKTNVINGPNTVTDPSVTTLHT) show a composition bias toward polar residues. The span at 502–516 (QERKPVEEGGHLMAE) shows a compositional bias: basic and acidic residues.

Belongs to the flagellar radial spoke RSP3 family. As to quaternary structure, may be a component of axonemal radial spokes. Interacts with IQUB. Interacts with phosphorylated MAPK1. Interacts with MEK1. Interacts with PKA regulatory subunits PRKAR1A and PRKAR1B. Interacts with RSPH1. Interacts with RSPH4A. Interacts with RSPH6A. Interacts with RSPH9. Interacts with CFAP61. Interacts with LRRC23.

It localises to the cytoplasm. Its subcellular location is the cytoskeleton. The protein resides in the cilium axoneme. The protein localises to the flagellum axoneme. Its function is as follows. May function as part of axonemal radial spoke complexes that play an important part in the motility of sperm and cilia. Functions as a protein kinase A-anchoring protein that scaffolds the cAMP-dependent protein kinase holoenzyme. May serve as a point of convergence for MAPK and PKA signaling in cilia. This is Radial spoke head protein 3 homolog A (Rsph3a) from Mus musculus (Mouse).